The chain runs to 329 residues: MHNLSLFEPGRGNVSCGGPFLGCPNESNPAPLPLPQPLAVAVPVVYGVICAVGLAGNSAVLYVLLRTPRMKTVTNVFILNLAIADELFTLVLPINIADFLLRRWPFGEVMCKLIVAVDQYNTFSSLYFLAVMSADRYLVVLATAESRRVSGRTYGAARAVSLAVWALVTLVVLPFAVFARLDEEQGRRQCVLVFPQPEAFWWRASRLYTLVLGFAIPVSTICALYITLLCRLRAIQLDSHAKALDRAKKRVTLLVVAILAVCLLCWTPYHLSTIVALTTDLPQTPLVIGISYFITSLSYANSCLNPFLYAFLDDSFRRSLRQLVSCRTA.

Residues 1–39 (MHNLSLFEPGRGNVSCGGPFLGCPNESNPAPLPLPQPLA) lie on the Extracellular side of the membrane. Residues asparagine 3, asparagine 13, and asparagine 25 are each glycosylated (N-linked (GlcNAc...) asparagine). Residues 40-63 (VAVPVVYGVICAVGLAGNSAVLYV) form a helical membrane-spanning segment. The Cytoplasmic segment spans residues 64–74 (LLRTPRMKTVT). The helical transmembrane segment at 75–99 (NVFILNLAIADELFTLVLPINIADF) threads the bilayer. The Extracellular segment spans residues 100–114 (LLRRWPFGEVMCKLI). Cysteine 111 and cysteine 190 are oxidised to a cystine. The chain crosses the membrane as a helical span at residues 115–134 (VAVDQYNTFSSLYFLAVMSA). The Cytoplasmic segment spans residues 135-159 (DRYLVVLATAESRRVSGRTYGAARA). The helical transmembrane segment at 160–179 (VSLAVWALVTLVVLPFAVFA) threads the bilayer. Over 180–204 (RLDEEQGRRQCVLVFPQPEAFWWRA) the chain is Extracellular. The chain crosses the membrane as a helical span at residues 205 to 226 (SRLYTLVLGFAIPVSTICALYI). At 227 to 250 (TLLCRLRAIQLDSHAKALDRAKKR) the chain is on the cytoplasmic side. Residues 251–275 (VTLLVVAILAVCLLCWTPYHLSTIV) traverse the membrane as a helical segment. Residues 276-285 (ALTTDLPQTP) lie on the Extracellular side of the membrane. A helical transmembrane segment spans residues 286–300 (LVIGISYFITSLSYA). Residues 301–329 (NSCLNPFLYAFLDDSFRRSLRQLVSCRTA) are Cytoplasmic-facing.

This sequence belongs to the G-protein coupled receptor 1 family.

It localises to the cell membrane. Functionally, interacts specifically with a number of opioid ligands. Receptor for neuropeptides B and W, which may be involved in neuroendocrine system regulation, food intake and the organization of other signals. The polypeptide is Neuropeptides B/W receptor type 1 (Npbwr1) (Rattus norvegicus (Rat)).